A 450-amino-acid chain; its full sequence is 3-phosphoshikimate 1-carboxyvinyltransferase (450 aa).

Lysine 23, serine 24, and arginine 28 together coordinate 3-phosphoshikimate. Lysine 23 contributes to the phosphoenolpyruvate binding site. Phosphoenolpyruvate is bound by residues glycine 96 and arginine 124. Positions 167, 168, 169, 196, 311, and 340 each coordinate 3-phosphoshikimate. Residue glutamine 169 coordinates phosphoenolpyruvate. Glutamate 311 serves as the catalytic Proton acceptor. Arginine 344, arginine 385, and lysine 410 together coordinate phosphoenolpyruvate. The disordered stretch occupies residues 426–450 (GQGWGYPQPRSGQRARRATGQGSGG).

Belongs to the EPSP synthase family. Monomer.

It localises to the cytoplasm. It catalyses the reaction 3-phosphoshikimate + phosphoenolpyruvate = 5-O-(1-carboxyvinyl)-3-phosphoshikimate + phosphate. Its pathway is metabolic intermediate biosynthesis; chorismate biosynthesis; chorismate from D-erythrose 4-phosphate and phosphoenolpyruvate: step 6/7. Functionally, catalyzes the transfer of the enolpyruvyl moiety of phosphoenolpyruvate (PEP) to the 5-hydroxyl of shikimate-3-phosphate (S3P) to produce enolpyruvyl shikimate-3-phosphate and inorganic phosphate. This Mycobacterium bovis (strain ATCC BAA-935 / AF2122/97) protein is 3-phosphoshikimate 1-carboxyvinyltransferase.